Consider the following 216-residue polypeptide: Phosphoenolpyruvate guanylyltransferase (216 aa).

Residues Thr143, Gly159, and Ser162 each coordinate phosphoenolpyruvate.

It belongs to the CofC family.

It carries out the reaction phosphoenolpyruvate + GTP + H(+) = enolpyruvoyl-2-diphospho-5'-guanosine + diphosphate. It participates in cofactor biosynthesis; coenzyme F420 biosynthesis. Guanylyltransferase that catalyzes the activation of phosphoenolpyruvate (PEP) as enolpyruvoyl-2-diphospho-5'-guanosine, via the condensation of PEP with GTP. It is involved in the biosynthesis of coenzyme F420, a hydride carrier cofactor. This chain is Phosphoenolpyruvate guanylyltransferase, found in Streptomyces scabiei (strain 87.22).